Reading from the N-terminus, the 1288-residue chain is MPNLQQTASQSQSQHHLHPHHLRPHQQQHHQQQQQQQQQQHTHHQQQQQHHSDFPLPDGWDIAKDFDGKTYYIDHINKKTTWLDPRDCYTKPQTFEDCVGDELPMGWEESYDPNIGPYYINHLAQSTQLEDPRQEWKTVQEQMLSDYLSAAQDQLENKREMFDVKQQRLLWAQEEYNHLKLAASRSSLCSSSSSMSRHDPELLRADLMLARERVHQLKQELTHITNDISYTERGMNTLYSVGEKINARENGCYDIAEVQAIREEMLKVHKSLVSGEKVREELMRSLVQIKNELGRQQISEENSDLASPFDRVCVASQTDLCGSSGDNLNGGARFAEMAKTKLQYAEWRKHIKKLQQQLADHVERIEPGQLESDKDRILLIQEKEKLLNDLNSISLKSRSEEEKRVIHQTRHKLEEDLKEAYEANNTCVANRLRFHEEKQLLLDKLQEALKSTKLLEERLKSFSSESTFSISSGSSLGSLSTASSKSALSFTDIYIDPFAVDSPIDVVDLRRRSQRLFQQHQQQRLHPVHPVLQQQQSAEVTLSPRSSLSMETPPASPMKYNAGADQTPQALKEEPTYANALPAPPAYTAPPPVPISGVRARPYDLDSTVLDCMMLEAKLQKLNMGTPLNLAAAPLSPISEKPSLLDLPQEMLSRSSSTSNTRSVSAAVSNESVAGDSGVFEASRAHLPRKELAQVQIGLKYLKQEGVLVVSLERANNLLALWTASADNSQVYLRAALLPNSLTSIRTKALGDFQKPVFNDTFAVPITLDKLLTKSLQVTVVTMTGQKEEIIGTVQISMAEFNPEDSTLKWYNVLSSKFIPSFESLDIPSTSAAAAAAAVAASNAPNSGNNREESSDESTITSSQTSTLTRNQAPCMELQEQIAAELLELGPLNEPECSDDDDDDEEEELDDKQLVSDVGLMNSSGMLDAYLQNMKQEFADKETNTDRAYLPEKSRGQSQLMDDRPVKRSQTFTPSAAVSKNRYNCRLNRSDSDSAMHCGVAPHTFQRGAAERRSLRFHTKAPKSVTKLHHTHIPRTSLDLELDLQAQHSKLYFLNDQIAKLQNLKEVLQKACENKDPLVAAWAIENEEFQRLVARADPAKCPEERQLQKLLMKTAKEIHKLRKTKVPKGCPDLVSFKEKITFFTRKGLSVPELPSEFTLPEANPIEEEEEEEDEDEFYNSAETAIAINTALVASSNRNKNLSEHPHRATSGAVPKLPAPVATPAATPAATPVATPVATPVATPAATPVVSPAVQTDAKPAAAPIPVASSDAEQQRFDYVVDRNYGVEV.

Residues 1-14 are compositionally biased toward low complexity; sequence MPNLQQTASQSQSQ. The tract at residues 1–60 is disordered; sequence MPNLQQTASQSQSQHHLHPHHLRPHQQQHHQQQQQQQQQQHTHHQQQQQHHSDFPLPDGW. Positions 15 to 28 are enriched in basic residues; sequence HHLHPHHLRPHQQQ. The segment covering 29–49 has biased composition (low complexity); that stretch reads HHQQQQQQQQQQHTHHQQQQQ. WW domains follow at residues 54-87 and 101-134; these read FPLP…DPRD and DELP…DPRQ. 2 coiled-coil regions span residues 201-229 and 335-463; these read ELLR…NDIS and AEMA…KSFS. Over residues 541 to 550 the composition is skewed to polar residues; sequence TLSPRSSLSM. Positions 541-560 are disordered; that stretch reads TLSPRSSLSMETPPASPMKY. The C2 domain occupies 691–811; the sequence is ELAQVQIGLK…NPEDSTLKWY (121 aa). Disordered regions lie at residues 841 to 870, 890 to 913, and 942 to 972; these read ASNA…TLTR, GPLN…DDKQ, and ETNT…SQTF. Residues 857 to 869 show a composition bias toward low complexity; the sequence is ESTITSSQTSTLT. Positions 896–910 are enriched in acidic residues; sequence ECSDDDDDDEEEELD. Basic and acidic residues predominate over residues 942–966; the sequence is ETNTDRAYLPEKSRGQSQLMDDRPV. Residues 1049–1076 adopt a coiled-coil conformation; it reads SKLYFLNDQIAKLQNLKEVLQKACENKD. Positions 1253-1272 are disordered; it reads VQTDAKPAAAPIPVASSDAE.

The protein belongs to the WWC family. KIBRA subfamily. As to quaternary structure, forms a complex with Mer and Ex. Interacts (via domain WW 1) with Ex (via RXPPXY motif). Interacts with Mer, Sav, Hpo and Wts.

Its subcellular location is the cytoplasm. It is found in the apical cell membrane. Its function is as follows. Regulator of the Hippo/SWH (Sav/Wts/Hpo) signaling pathway, a signaling pathway that plays a pivotal role in organ size control and tumor suppression by restricting proliferation and promoting apoptosis. The core of this pathway is composed of a kinase cascade wherein Hippo (Hpo), in complex with its regulatory protein Salvador (Sav), phosphorylates and activates Warts (Wts) in complex with its regulatory protein Mats, which in turn phosphorylates and inactivates the Yorkie (Yki) oncoprotein. Kibra acts synergistically along with Ex and Mer to regulate the Hippo signaling pathway. The protein is Protein kibra (Kibra) of Drosophila yakuba (Fruit fly).